We begin with the raw amino-acid sequence, 127 residues long: Glycine cleavage system H protein (127 aa).

One can recognise a Lipoyl-binding domain in the interval 22–104 (KARIGITHFA…YEKAWMIVVE (83 aa)). N6-lipoyllysine is present on Lys63.

It belongs to the GcvH family. As to quaternary structure, the glycine cleavage system is composed of four proteins: P, T, L and H. Requires (R)-lipoate as cofactor.

Functionally, the glycine cleavage system catalyzes the degradation of glycine. The H protein shuttles the methylamine group of glycine from the P protein to the T protein. Is also involved in protein lipoylation via its role as an octanoyl/lipoyl carrier protein intermediate. This Bacillus velezensis (strain DSM 23117 / BGSC 10A6 / LMG 26770 / FZB42) (Bacillus amyloliquefaciens subsp. plantarum) protein is Glycine cleavage system H protein.